We begin with the raw amino-acid sequence, 186 residues long: Large ribosomal subunit protein uL22 (186 aa).

Belongs to the universal ribosomal protein uL22 family. In terms of assembly, component of the large ribosomal subunit (LSU). Mature N.crassa ribosomes consist of a small (40S) and a large (60S) subunit. The 40S small subunit contains 1 molecule of ribosomal RNA (18S rRNA) and at least 32 different proteins. The large 60S subunit contains 3 rRNA molecules (26S, 5.8S and 5S rRNA) and at least 42 different proteins.

Its subcellular location is the cytoplasm. In terms of biological role, component of the ribosome, a large ribonucleoprotein complex responsible for the synthesis of proteins in the cell. The small ribosomal subunit (SSU) binds messenger RNAs (mRNAs) and translates the encoded message by selecting cognate aminoacyl-transfer RNA (tRNA) molecules. The large subunit (LSU) contains the ribosomal catalytic site termed the peptidyl transferase center (PTC), which catalyzes the formation of peptide bonds, thereby polymerizing the amino acids delivered by tRNAs into a polypeptide chain. The nascent polypeptides leave the ribosome through a tunnel in the LSU and interact with protein factors that function in enzymatic processing, targeting, and the membrane insertion of nascent chains at the exit of the ribosomal tunnel. The sequence is that of Large ribosomal subunit protein uL22 (rpl-17) from Neurospora crassa (strain ATCC 24698 / 74-OR23-1A / CBS 708.71 / DSM 1257 / FGSC 987).